We begin with the raw amino-acid sequence, 142 residues long: Small ribosomal subunit protein uS12 (142 aa).

This sequence belongs to the universal ribosomal protein uS12 family. As to quaternary structure, part of the 30S ribosomal subunit.

In terms of biological role, with S4 and S5 plays an important role in translational accuracy. Located at the interface of the 30S and 50S subunits. This is Small ribosomal subunit protein uS12 from Methanospirillum hungatei JF-1 (strain ATCC 27890 / DSM 864 / NBRC 100397 / JF-1).